The following is a 137-amino-acid chain: Small ribosomal subunit protein uS12 (137 aa).

Residues 1 to 25 (MPTINQLVRQGRKSKTYKSDSPALS) are disordered. 3-methylthioaspartic acid is present on aspartate 102.

This sequence belongs to the universal ribosomal protein uS12 family. Part of the 30S ribosomal subunit. Contacts proteins S8 and S17. May interact with IF1 in the 30S initiation complex.

With S4 and S5 plays an important role in translational accuracy. Functionally, interacts with and stabilizes bases of the 16S rRNA that are involved in tRNA selection in the A site and with the mRNA backbone. Located at the interface of the 30S and 50S subunits, it traverses the body of the 30S subunit contacting proteins on the other side and probably holding the rRNA structure together. The combined cluster of proteins S8, S12 and S17 appears to hold together the shoulder and platform of the 30S subunit. The chain is Small ribosomal subunit protein uS12 from Finegoldia magna (strain ATCC 29328 / DSM 20472 / WAL 2508) (Peptostreptococcus magnus).